The primary structure comprises 169 residues: Eukaryotic translation initiation factor 5A-2 (169 aa).

Position 64 is a hypusine (lysine 64).

The protein belongs to the eIF-5A family. Post-translationally, lys-51 undergoes hypusination, a unique post-translational modification that consists in the addition of a butylamino group from spermidine to lysine side chain, leading to the formation of the unusual amino acid hypusine. eIF-5As are the only known proteins to undergo this modification, which is essential for their function.

It localises to the cytoplasm. The protein resides in the nucleus. Translation factor that promotes translation elongation and termination, particularly upon ribosome stalling at specific amino acid sequence contexts. Binds between the exit (E) and peptidyl (P) site of the ribosome and promotes rescue of stalled ribosome: specifically required for efficient translation of polyproline-containing peptides as well as other motifs that stall the ribosome. Acts as a ribosome quality control (RQC) cofactor by joining the RQC complex to facilitate peptidyl transfer during CAT tailing step. This chain is Eukaryotic translation initiation factor 5A-2 (tif51b), found in Schizosaccharomyces pombe (strain 972 / ATCC 24843) (Fission yeast).